Here is a 523-residue protein sequence, read N- to C-terminus: Cyclic di-GMP binding protein BcsE (523 aa).

The protein belongs to the BcsE family.

In terms of biological role, required for cellulose biosynthesis. May have protease activity, but BcsA is not targeted. Binds bis-(3'-5') cyclic diguanylic acid (c-di-GMP). The polypeptide is Cyclic di-GMP binding protein BcsE (Salmonella typhimurium (strain LT2 / SGSC1412 / ATCC 700720)).